The following is a 220-amino-acid chain: Chaperone protein TorD (220 aa).

This sequence belongs to the TorD/DmsD family. TorD subfamily.

It localises to the cytoplasm. In terms of biological role, involved in the biogenesis of TorA. Acts on TorA before the insertion of the molybdenum cofactor and, as a result, probably favors a conformation of the apoenzyme that is competent for acquiring the cofactor. The sequence is that of Chaperone protein TorD from Vibrio cholerae serotype O1 (strain M66-2).